Consider the following 323-residue polypeptide: MAETIGSEVSSMSDKSAKIFVAGHRGLVGSAIVRKLQEQGFTNLVLKTHAELDLTRQADVESFFSQEKPVYVILAAAKVGGIHANNTYPADFIGVNLQIQTNVIHSAYEHGVKKLLFLGSSCIYPKFAPQPIPESALLTASLEPTNEWYAIAKIAGIKTCQAYRIQHGWDAISGMPTNLYGPNDNFHPENSHVLPALMRRFHEAKVNGAEEVVVWGTGSPLREFLHVDDLADACVFLLDRYSGLEHVNIGSGQEVTIRELAELVKEVVGFEGKLGWDCTKPDGTPRKLMDSSKLASLGWTPKVSLRDGLSQTYDWYLKNVCNR.

An N-acetylalanine modification is found at Ala2. 23-29 (GHRGLVG) provides a ligand contact to NADP(+). Tyr149 (proton donor/acceptor) is an active-site residue. Residues Lys153, 176 to 179 (PTNL), and His192 each bind NADP(+). Substrate is bound by residues Arg200, Trp215, Arg222, and Asp282.

The protein belongs to the NAD(P)-dependent epimerase/dehydratase family. Fucose synthase subfamily. In terms of assembly, binds and stabilizes MUR1. Homodimer. Highly expressed in roots and flowers, less abundant in leaves, stems and siliques.

The catalysed reaction is GDP-beta-L-fucose + NADP(+) = GDP-4-dehydro-alpha-D-rhamnose + NADPH + H(+). It functions in the pathway nucleotide-sugar biosynthesis; GDP-L-fucose biosynthesis via de novo pathway; GDP-L-fucose from GDP-alpha-D-mannose: step 2/2. In terms of biological role, catalyzes the two-step NADP-dependent conversion of GDP-4-dehydro-6-deoxy-D-mannose to GDP-fucose, involving an epimerase and a reductase reaction. Not involved in the synthesis of GDP-L-galactose from GDP-D-mannose. This is GDP-L-fucose synthase 1 (GER1) from Arabidopsis thaliana (Mouse-ear cress).